The primary structure comprises 246 residues: Probable transcriptional regulatory protein ASA_2843 (246 aa).

Belongs to the TACO1 family.

The protein localises to the cytoplasm. The chain is Probable transcriptional regulatory protein ASA_2843 from Aeromonas salmonicida (strain A449).